We begin with the raw amino-acid sequence, 504 residues long: Putative F-box/FBD/LRR-repeat protein At3g59240 (504 aa).

The region spanning 7 to 60 (KDIISDLPEALICHLLSFVPTKEAALTSLLSEKWRYLFAFAPILDFDDSVWMQS) is the F-box domain. 7 LRR repeats span residues 69 to 95 (HRKF…SLNC), 145 to 171 (RIRT…DLSS), 173 to 198 (WFRD…TMSD), 286 to 312 (TNLF…TFCC), 329 to 354 (DKDV…VFKG), 369 to 396 (CLCK…KFGE), and 403 to 428 (DEEK…ILHY). One can recognise an FBD domain in the interval 382 to 427 (SSSPVKVLKILKFGEVASYFGDEEKQLELVKYFLETMPNLEQMILH).

This chain is Putative F-box/FBD/LRR-repeat protein At3g59240, found in Arabidopsis thaliana (Mouse-ear cress).